We begin with the raw amino-acid sequence, 393 residues long: Large ribosomal subunit protein uL2m (393 aa).

The transit peptide at 1–43 directs the protein to the mitochondrion; it reads MLVLGSLRSALSCSSTASLISKRNPCYPYGILCRTLSQSVKLW. The tract at residues 337-393 is disordered; the sequence is AMNKCDHPHGGGRGKSKSNKLSMSPWGQLAKGYKTRRGKNQNRMKVKDRPRGKDARL. Basic residues predominate over residues 369 to 380; sequence YKTRRGKNQNRM. The span at 381–393 shows a compositional bias: basic and acidic residues; it reads KVKDRPRGKDARL.

Belongs to the universal ribosomal protein uL2 family. Component of the mitochondrial large ribosomal subunit (mt-LSU). Mature yeast 74S mitochondrial ribosomes consist of a small (37S) and a large (54S) subunit. The 37S small subunit contains a 15S ribosomal RNA (15S mt-rRNA) and 34 different proteins. The 54S large subunit contains a 21S rRNA (21S mt-rRNA) and 46 different proteins. uL2m has a Na/K ligand binding site.

The protein localises to the mitochondrion. In terms of biological role, component of the mitochondrial ribosome (mitoribosome), a dedicated translation machinery responsible for the synthesis of mitochondrial genome-encoded proteins, including at least some of the essential transmembrane subunits of the mitochondrial respiratory chain. The mitoribosomes are attached to the mitochondrial inner membrane and translation products are cotranslationally integrated into the membrane. This is Large ribosomal subunit protein uL2m (RML2) from Saccharomyces cerevisiae (strain ATCC 204508 / S288c) (Baker's yeast).